Consider the following 407-residue polypeptide: Argininosuccinate synthase (407 aa).

ATP is bound by residues 13-21 and alanine 40; that span reads AYSGGLDTS. Residues tyrosine 91 and serine 96 each coordinate L-citrulline. Glycine 121 is a binding site for ATP. L-aspartate-binding residues include threonine 123, asparagine 127, and aspartate 128. Asparagine 127 contributes to the L-citrulline binding site. 5 residues coordinate L-citrulline: arginine 131, serine 182, serine 191, glutamate 267, and tyrosine 279.

It belongs to the argininosuccinate synthase family. Type 1 subfamily. Homotetramer.

Its subcellular location is the cytoplasm. It catalyses the reaction L-citrulline + L-aspartate + ATP = 2-(N(omega)-L-arginino)succinate + AMP + diphosphate + H(+). It participates in amino-acid biosynthesis; L-arginine biosynthesis; L-arginine from L-ornithine and carbamoyl phosphate: step 2/3. The sequence is that of Argininosuccinate synthase from Rhizobium etli (strain ATCC 51251 / DSM 11541 / JCM 21823 / NBRC 15573 / CFN 42).